The following is a 260-amino-acid chain: Pro-opiomelanocortin (260 aa).

Positions 1–25 (MLQPVWSCILALLGVFIFHVGEVRS) are cleaved as a signal peptide. Pyrrolidone carboxylic acid is present on Gln26. Phe86 is modified (phenylalanine amide). Asn90 is a glycosylation site (N-linked (GlcNAc...) asparagine). Residues 104-138 (EDIANYPILNLLTGSDNQNTQQGIMEDEAVDRQDS) constitute a propeptide that is removed on maturation. Val153 carries the post-translational modification Valine amide.

This sequence belongs to the POMC family. Specific enzymatic cleavages at paired basic residues yield the different active peptides.

The protein resides in the secreted. Stimulates the adrenal glands to release cortisol. Functionally, anorexigenic peptide. Increases the pigmentation of skin by increasing melanin production in melanocytes. In terms of biological role, increases the pigmentation of skin by increasing melanin production in melanocytes. Its function is as follows. Endogenous orexigenic opiate. Endogenous opiate. This Pelophylax ridibundus (Marsh frog) protein is Pro-opiomelanocortin (pomc).